The primary structure comprises 374 residues: Chorismate synthase (374 aa).

Arg55 serves as a coordination point for NADP(+). Residues Arg132–Ser134, Gly293, Lys308–Ser312, and Arg335 each bind FMN.

Belongs to the chorismate synthase family. It depends on FMNH2 as a cofactor.

It carries out the reaction 5-O-(1-carboxyvinyl)-3-phosphoshikimate = chorismate + phosphate. The protein operates within metabolic intermediate biosynthesis; chorismate biosynthesis; chorismate from D-erythrose 4-phosphate and phosphoenolpyruvate: step 7/7. Catalyzes the anti-1,4-elimination of the C-3 phosphate and the C-6 proR hydrogen from 5-enolpyruvylshikimate-3-phosphate (EPSP) to yield chorismate, which is the branch point compound that serves as the starting substrate for the three terminal pathways of aromatic amino acid biosynthesis. This reaction introduces a second double bond into the aromatic ring system. The polypeptide is Chorismate synthase (Methanothermobacter thermautotrophicus (strain ATCC 29096 / DSM 1053 / JCM 10044 / NBRC 100330 / Delta H) (Methanobacterium thermoautotrophicum)).